Consider the following 188-residue polypeptide: FMN-dependent NADPH-azoreductase (188 aa).

It belongs to the azoreductase type 2 family. In terms of assembly, homotetramer. FMN is required as a cofactor.

Its function is as follows. Catalyzes the reductive cleavage of azo bond in aromatic azo compounds to the corresponding amines. Requires NADPH, but not NADH, as an electron donor for its activity. The polypeptide is FMN-dependent NADPH-azoreductase (azo1) (Staphylococcus haemolyticus (strain JCSC1435)).